We begin with the raw amino-acid sequence, 848 residues long: Xylosyltransferase (848 aa).

Residues 1–14 are Cytoplasmic-facing; that stretch reads MSLHRTLRRFLRKW. Residues 15–35 form a helical; Signal-anchor for type II membrane protein membrane-spanning segment; it reads KALVYAVSFILLIQAFFTFQS. The Lumenal portion of the chain corresponds to 36–843; sequence SPNLMEEEHL…PKTELISVKP (808 aa). 4 disulfides stabilise this stretch: cysteine 145/cysteine 173, cysteine 189/cysteine 427, cysteine 446/cysteine 459, and cysteine 448/cysteine 457. Residues valine 219, aspartate 247, and 276–278 contribute to the UDP-alpha-D-xylose site; that span reads TIW. N-linked (GlcNAc...) asparagine glycosylation occurs at asparagine 306. 379–380 contacts UDP-alpha-D-xylose; sequence DW. UDP-alpha-D-xylose is bound by residues serine 460 and 482-483; that span reads RK. 2 disulfides stabilise this stretch: cysteine 529–cysteine 811 and cysteine 794–cysteine 822. An N-linked (GlcNAc...) asparagine glycan is attached at asparagine 530. The disordered stretch occupies residues 824–848; it reads NTNWSSLSPDPKTELISVKPDGRIR. The N-linked (GlcNAc...) asparagine glycan is linked to asparagine 826.

Belongs to the glycosyltransferase 14 family. XylT subfamily. It depends on a divalent metal cation as a cofactor.

The protein localises to the endoplasmic reticulum membrane. Its subcellular location is the golgi apparatus membrane. It carries out the reaction UDP-alpha-D-xylose + L-seryl-[protein] = 3-O-(beta-D-xylosyl)-L-seryl-[protein] + UDP + H(+). The protein operates within glycan metabolism; chondroitin sulfate biosynthesis. It participates in glycan metabolism; heparan sulfate biosynthesis. Its function is as follows. Catalyzes the first step in biosynthesis of glycosaminoglycan. Transfers D-xylose from UDP-D-xylose to specific serine residues of the core protein. Initial enzyme in the biosynthesis of chondroitin sulfate and dermatan sulfate proteoglycans in fibroblasts and chondrocytes. This Ciona intestinalis (Transparent sea squirt) protein is Xylosyltransferase (xt).